Reading from the N-terminus, the 239-residue chain is Probable transcriptional regulatory protein BAA_0622 (239 aa).

Belongs to the TACO1 family. YeeN subfamily.

The protein localises to the cytoplasm. This is Probable transcriptional regulatory protein BAA_0622 from Bacillus anthracis (strain A0248).